The following is a 109-amino-acid chain: MSFFLNSLRGNQEVSQEKLDVAGVQFDAMCSTFNNILSTCLEKCIPHEGFGEPDLTKGEQCCIDRCVAKMHYSNRLIGGFVQTRGFGPENQLRHYSRFVAKEIADDSKK.

S2 carries the post-translational modification N-acetylserine. A Twin CX3C motif motif is present at residues 40–66 (CLEKCIPHEGFGEPDLTKGEQCCIDRC). 2 disulfides stabilise this stretch: C40/C66 and C44/C62.

Belongs to the small Tim family. As to quaternary structure, component of the TIM22 complex, whose core is composed of TIM18, TIM22 and TIM54, associated with the peripheral proteins MRS5/TIM12 and the 70 kDa heterohexamer composed of TIM9 and TIM10 (or TIM8 and TIM13). Interacts directly with both the TIM22 protein and the TIM9-TIM10 heterohexamer. Interacts with multi-pass transmembrane proteins in transit.

It is found in the mitochondrion inner membrane. It localises to the mitochondrion intermembrane space. Its function is as follows. Essential component of the TIM22 complex, a complex that mediates the import and insertion of multi-pass transmembrane proteins into the mitochondrial inner membrane. The TIM22 complex forms a twin-pore translocase that uses the membrane potential as external driving force. In the TIM22 complex, it acts as a docking point for the soluble TIM9-TIM10 heterohexamer that guides the target proteins in transit through the aqueous mitochondrial intermembrane space. The sequence is that of Mitochondrial import inner membrane translocase subunit TIM12 (TIM12) from Saccharomyces cerevisiae (strain ATCC 204508 / S288c) (Baker's yeast).